Reading from the N-terminus, the 286-residue chain is MPDTDNTKIIDGRAIAKKVEAEVKADVERLVREKGITPGLSAILVGEDPASKMYVRLKHKACGRVGIFAEDQHLPEDITQEELLEAISSLNARKDIHGILLQLPLPKHLNEQEAMNAIDPAKDADGFHPFNMGQLLIGVEELVPCTPKGIIRALEEYGVEIQGKHAVIVGHSNVVGKPMAAMLVNRNATVSICHVFTKDVTKFTRDADILVVATGVKHLIKEDMVKEGSVIFDVGITEENGKVYGDVDFENVIKKASRVTPVPGGVGPVTIATLMQHVLMSAQKTA.

NADP(+)-binding positions include 170-172 and Ile-236; that span reads GHS.

This sequence belongs to the tetrahydrofolate dehydrogenase/cyclohydrolase family. Homodimer.

The catalysed reaction is (6R)-5,10-methylene-5,6,7,8-tetrahydrofolate + NADP(+) = (6R)-5,10-methenyltetrahydrofolate + NADPH. It catalyses the reaction (6R)-5,10-methenyltetrahydrofolate + H2O = (6R)-10-formyltetrahydrofolate + H(+). Its pathway is one-carbon metabolism; tetrahydrofolate interconversion. Functionally, catalyzes the oxidation of 5,10-methylenetetrahydrofolate to 5,10-methenyltetrahydrofolate and then the hydrolysis of 5,10-methenyltetrahydrofolate to 10-formyltetrahydrofolate. The chain is Bifunctional protein FolD from Methanococcoides burtonii (strain DSM 6242 / NBRC 107633 / OCM 468 / ACE-M).